The chain runs to 165 residues: Endoribonuclease YbeY (165 aa).

The Zn(2+) site is built by His130, His134, and His140.

Belongs to the endoribonuclease YbeY family. Requires Zn(2+) as cofactor.

It localises to the cytoplasm. Functionally, single strand-specific metallo-endoribonuclease involved in late-stage 70S ribosome quality control and in maturation of the 3' terminus of the 16S rRNA. The sequence is that of Endoribonuclease YbeY from Streptococcus agalactiae serotype Ia (strain ATCC 27591 / A909 / CDC SS700).